The primary structure comprises 526 residues: Exodeoxyribonuclease 7 large subunit (526 aa).

The segment at 497-526 is disordered; the sequence is AMTTEGGTPPGGAKKRSTKPAEPTKQGSLF.

The protein belongs to the XseA family. As to quaternary structure, heterooligomer composed of large and small subunits.

It is found in the cytoplasm. It catalyses the reaction Exonucleolytic cleavage in either 5'- to 3'- or 3'- to 5'-direction to yield nucleoside 5'-phosphates.. Its function is as follows. Bidirectionally degrades single-stranded DNA into large acid-insoluble oligonucleotides, which are then degraded further into small acid-soluble oligonucleotides. The sequence is that of Exodeoxyribonuclease 7 large subunit from Rhizobium etli (strain ATCC 51251 / DSM 11541 / JCM 21823 / NBRC 15573 / CFN 42).